The primary structure comprises 188 residues: Elongation factor P (188 aa).

Belongs to the elongation factor P family.

The protein localises to the cytoplasm. It functions in the pathway protein biosynthesis; polypeptide chain elongation. Functionally, involved in peptide bond synthesis. Stimulates efficient translation and peptide-bond synthesis on native or reconstituted 70S ribosomes in vitro. Probably functions indirectly by altering the affinity of the ribosome for aminoacyl-tRNA, thus increasing their reactivity as acceptors for peptidyl transferase. In Ureaplasma urealyticum serovar 10 (strain ATCC 33699 / Western), this protein is Elongation factor P.